A 180-amino-acid polypeptide reads, in one-letter code: ATP-dependent protease subunit HslV (180 aa).

T7 is an active-site residue. The Na(+) site is built by G165, C168, and T171.

Belongs to the peptidase T1B family. HslV subfamily. In terms of assembly, a double ring-shaped homohexamer of HslV is capped on each side by a ring-shaped HslU homohexamer. The assembly of the HslU/HslV complex is dependent on binding of ATP.

It localises to the cytoplasm. It carries out the reaction ATP-dependent cleavage of peptide bonds with broad specificity.. With respect to regulation, allosterically activated by HslU binding. Its function is as follows. Protease subunit of a proteasome-like degradation complex believed to be a general protein degrading machinery. The protein is ATP-dependent protease subunit HslV of Bacillus cereus (strain ATCC 10987 / NRS 248).